Reading from the N-terminus, the 238-residue chain is Adapter protein MecA (238 aa).

Residues 108-133 (EDENEESVQGNQQQRRSHASDHSKRA) form a disordered region.

The protein belongs to the MecA family. In terms of assembly, homodimer.

Enables the recognition and targeting of unfolded and aggregated proteins to the ClpC protease or to other proteins involved in proteolysis. The chain is Adapter protein MecA from Staphylococcus carnosus (strain TM300).